The primary structure comprises 294 residues: MKHSSLRRSLLLAGITLPLVSFALPAWANALPASVDKQLAELERNANGRLGVAMINTGNGTKILYRAAQRFPFCSTFKFMLAAAVLDQSQSQPNLLNKHINYHESDLLSYAPITRKNLAHGMTVSELCAATIQYSDNTAANLLIKELGGLAAVNQFARSIGDQMFRLDRWEPDLNTARPNDPRDTTTPAAMAASMNKLVLGDALRPAQRSQLAVWLKGNTTGDATIRAGAPTDWIVGDKTGSGDYGTTNDIAVLWPTKGAPIVLVVYFTQREKDAKPRRDVLASVTKIILSQIS.

Positions 1–30 (MKHSSLRRSLLLAGITLPLVSFALPAWANA) are cleaved as a signal peptide. Residue S75 is the Acyl-ester intermediate of the active site. Residue 239-241 (KTG) participates in substrate binding.

It belongs to the class-A beta-lactamase family.

It catalyses the reaction a beta-lactam + H2O = a substituted beta-amino acid. This is Beta-lactamase (blaA) from Yersinia enterocolitica.